The following is a 298-amino-acid chain: Mitochondrial 2-oxodicarboxylate carrier (298 aa).

3 Solcar repeats span residues 10–99 (HETC…YKKF), 106–195 (SPGL…VKDN), and 204–293 (LEFL…TYAW). 6 helical membrane-spanning segments follow: residues 16–36 (VAAGGCAGLVEICLMHPLDVV), 69–88 (FGFYKGIIPPILAETPKRAV), 112–132 (PIAGLGSGLTEAVVVNPFEVV), 166–186 (GLNKGFTATLGRHGIFNMTYF), 204–224 (LEFLRKFGIGFVSGTVGSVFN), and 276–296 (LGPGGGVMLLVYEYTYAWLQE).

The protein belongs to the mitochondrial carrier (TC 2.A.29) family. As to expression, widely expressed.

The protein resides in the mitochondrion inner membrane. It catalyses the reaction 2-oxoadipate(in) + 2-oxoglutarate(out) = 2-oxoadipate(out) + 2-oxoglutarate(in). It carries out the reaction hexanedioate(in) + 2-oxoglutarate(out) = hexanedioate(out) + 2-oxoglutarate(in). The enzyme catalyses L-2-aminoadipate(in) + 2-oxoglutarate(out) = L-2-aminoadipate(out) + 2-oxoglutarate(in). The catalysed reaction is glutarate(in) + 2-oxoglutarate(out) = glutarate(out) + 2-oxoglutarate(in). It catalyses the reaction 2-oxoheptanedioate(in) + 2-oxoglutarate(out) = 2-oxoheptanedioate(out) + 2-oxoglutarate(in). It carries out the reaction heptanedioate(in) + 2-oxoglutarate(out) = heptanedioate(out) + 2-oxoglutarate(in). The enzyme catalyses citrate(in) + 2-oxoglutarate(out) = citrate(out) + 2-oxoglutarate(in). Its function is as follows. Transports dicarboxylates across the inner membranes of mitochondria by a counter-exchange mechanism. Can transport 2-oxoadipate (2-oxohexanedioate), 2-oxoglutarate, adipate (hexanedioate), glutarate, and to a lesser extent, pimelate (heptanedioate), 2-oxopimelate (2-oxoheptanedioate), 2-aminoadipate (2-aminohexanedioate), oxaloacetate, and citrate. Plays a central role in catabolism of lysine, hydroxylysine, and tryptophan, by transporting common metabolite intermediates (such as 2-oxoadipate) into the mitochondria, where it is converted into acetyl-CoA and can enter the citric acid (TCA) cycle. In Rattus norvegicus (Rat), this protein is Mitochondrial 2-oxodicarboxylate carrier (Slc25a21).